The primary structure comprises 311 residues: Ornithine carbamoyltransferase (311 aa).

Residues S54–T57, Q81, R105, and H132–Q135 each bind carbamoyl phosphate. Residues N164, D228, and S232 to M233 contribute to the L-ornithine site. Residues C268–L269 and R296 contribute to the carbamoyl phosphate site.

This sequence belongs to the aspartate/ornithine carbamoyltransferase superfamily. OTCase family.

It is found in the cytoplasm. The enzyme catalyses carbamoyl phosphate + L-ornithine = L-citrulline + phosphate + H(+). The protein operates within amino-acid biosynthesis; L-arginine biosynthesis; L-arginine from L-ornithine and carbamoyl phosphate: step 1/3. Reversibly catalyzes the transfer of the carbamoyl group from carbamoyl phosphate (CP) to the N(epsilon) atom of ornithine (ORN) to produce L-citrulline. The protein is Ornithine carbamoyltransferase of Renibacterium salmoninarum (strain ATCC 33209 / DSM 20767 / JCM 11484 / NBRC 15589 / NCIMB 2235).